Reading from the N-terminus, the 315-residue chain is Putative heme-binding peroxidase (315 aa).

Histidine 40 acts as the Proton acceptor in catalysis. Histidine 169 lines the heme b pocket. Tryptophan 185 (tryptophan radical intermediate) is an active-site residue. The interval 267-286 (EEGKPLDKTAPPAGDETCPV) is disordered.

This sequence belongs to the peroxidase family. Cytochrome c peroxidase subfamily. It depends on heme b as a cofactor.

Destroys radicals which are normally produced within the cells and which are toxic to biological systems. This Cryptococcus neoformans var. neoformans serotype D (strain B-3501A) (Filobasidiella neoformans) protein is Putative heme-binding peroxidase.